The following is a 111-amino-acid chain: UPF0060 membrane protein Aave_2845 (111 aa).

A run of 4 helical transmembrane segments spans residues 7 to 27 (FLLY…PWLW), 33 to 53 (SAWL…LLTL), 63 to 83 (AAYG…VDGI), and 90 to 110 (LAGA…PRGA).

Belongs to the UPF0060 family.

The protein resides in the cell inner membrane. This is UPF0060 membrane protein Aave_2845 from Paracidovorax citrulli (strain AAC00-1) (Acidovorax citrulli).